Consider the following 199-residue polypeptide: Holliday junction branch migration complex subunit RuvA (199 aa).

The interval Met-1–Ala-64 is domain I. Positions Thr-65–Arg-143 are domain II. A flexible linker region spans residues Leu-144–Ala-154. The segment at Ala-154–Ala-199 is domain III.

Belongs to the RuvA family. Homotetramer. Forms an RuvA(8)-RuvB(12)-Holliday junction (HJ) complex. HJ DNA is sandwiched between 2 RuvA tetramers; dsDNA enters through RuvA and exits via RuvB. An RuvB hexamer assembles on each DNA strand where it exits the tetramer. Each RuvB hexamer is contacted by two RuvA subunits (via domain III) on 2 adjacent RuvB subunits; this complex drives branch migration. In the full resolvosome a probable DNA-RuvA(4)-RuvB(12)-RuvC(2) complex forms which resolves the HJ.

Its subcellular location is the cytoplasm. Its function is as follows. The RuvA-RuvB-RuvC complex processes Holliday junction (HJ) DNA during genetic recombination and DNA repair, while the RuvA-RuvB complex plays an important role in the rescue of blocked DNA replication forks via replication fork reversal (RFR). RuvA specifically binds to HJ cruciform DNA, conferring on it an open structure. The RuvB hexamer acts as an ATP-dependent pump, pulling dsDNA into and through the RuvAB complex. HJ branch migration allows RuvC to scan DNA until it finds its consensus sequence, where it cleaves and resolves the cruciform DNA. The polypeptide is Holliday junction branch migration complex subunit RuvA (Azoarcus sp. (strain BH72)).